The following is a 238-amino-acid chain: NADH-quinone oxidoreductase subunit C (238 aa).

A disordered region spans residues 1–20 (MSSPDQNPSDAAGQTGSSNE).

This sequence belongs to the complex I 30 kDa subunit family. NDH-1 is composed of 14 different subunits. Subunits NuoB, C, D, E, F, and G constitute the peripheral sector of the complex.

The protein resides in the cell membrane. The catalysed reaction is a quinone + NADH + 5 H(+)(in) = a quinol + NAD(+) + 4 H(+)(out). NDH-1 shuttles electrons from NADH, via FMN and iron-sulfur (Fe-S) centers, to quinones in the respiratory chain. The immediate electron acceptor for the enzyme in this species is believed to be a menaquinone. Couples the redox reaction to proton translocation (for every two electrons transferred, four hydrogen ions are translocated across the cytoplasmic membrane), and thus conserves the redox energy in a proton gradient. In Mycobacterium ulcerans (strain Agy99), this protein is NADH-quinone oxidoreductase subunit C.